The primary structure comprises 254 residues: 2-dehydro-3-deoxy-D-gluconate 5-dehydrogenase (254 aa).

Y159 functions as the Proton acceptor in the catalytic mechanism.

It belongs to the short-chain dehydrogenases/reductases (SDR) family.

It carries out the reaction 2-dehydro-3-deoxy-D-gluconate + NAD(+) = 3-deoxy-D-glycero-2,5-hexodiulosonate + NADH + H(+). Involved in the degradation of 3,6-anhydro-L-galactose, which is the major monomeric sugar of red macroalgae. Catalyzes the fourth step of the pathway, the reduction of 3-deoxy-D-glycero-2,5-hexodiulosonate (L-DDGal) to 2-dehydro-3-deoxy-D-gluconate (KDG). This chain is 2-dehydro-3-deoxy-D-gluconate 5-dehydrogenase, found in Pseudoalteromonas atlantica (strain T6c / ATCC BAA-1087).